Here is a 463-residue protein sequence, read N- to C-terminus: tRNA (guanine(10)-N(2))-methyltransferase TRMT11 (463 aa).

The residue at position 2 (Ala2) is an N-acetylalanine.

It belongs to the class I-like SAM-binding methyltransferase superfamily. TRM11 methyltransferase family. In terms of assembly, part of the heterodimeric TRMT11-TRM112 methyltransferase complex; this complex forms an active tRNA methyltransferase, where TRMT112 acts as an activator of the catalytic subunit TRMT11.

It is found in the cytoplasm. The enzyme catalyses guanosine(10) in tRNA + S-adenosyl-L-methionine = N(2)-methylguanosine(10) in tRNA + S-adenosyl-L-homocysteine + H(+). In terms of biological role, catalytic subunit of the TRMT11-TRM112 methyltransferase complex, that specifically mediates the S-adenosyl-L-methionine-dependent N(2)-methylation of guanosine nucleotide at position 10 (m2G10) in tRNAs. This is one of the major tRNA (guanine-N(2))-methyltransferases. This is tRNA (guanine(10)-N(2))-methyltransferase TRMT11 from Homo sapiens (Human).